The following is a 33-amino-acid chain: Maurocalcin (33 aa).

3 cysteine pairs are disulfide-bonded: cysteine 3–cysteine 17, cysteine 10–cysteine 21, and cysteine 16–cysteine 32. Residues 22-24 are essential for stimulation of [3H]ryanodine binding to RYR; the sequence is KRR.

The protein belongs to the scorpion calcin family. Post-translationally, the non-natural D-maurocalcin (a chiral analog of maurocalcin composed of D-amino acids) completely loses the ability to stimulate [3H]ryanodine binding and calcium release. Its protease resistance, combined with its efficient cell penetration at concentrations devoid of cell toxicity, suggests that it should be an excellent vector for in vivo applications. Expressed by the venom gland.

The protein resides in the secreted. In terms of biological role, this toxin stabilizes ryanodine receptor 1 (RyR1) opening in a long-lasting subconductance state (48%-60% of the full conductance state). Furthermore, it triggers calcium release from sarcoplasmic vesicles (6.6 nM are enough to induce a sharp release, and 60% of the total calcium is released after toxin (100 nM) addition) probably by acting as a cell-penetrating peptide (CPP). In addition, it has been shown to dose-dependently stimulate ryanodine binding to RyR1 (EC(50)=12.5-26.4 nM). It also augments the bell-shaped calcium-[3H]ryanodine binding curve that is maximal at about 10 uM calcium concentration. It binds a different site as ryanodine. It acts synergistically with caffeine. In vivo, intracerebroventricular injection into mice causes death. The polypeptide is Maurocalcin (Scorpio palmatus (Israeli golden scorpion)).